A 102-amino-acid polypeptide reads, in one-letter code: Small ribosomal subunit protein uS10 (102 aa).

The protein belongs to the universal ribosomal protein uS10 family. In terms of assembly, part of the 30S ribosomal subunit.

Involved in the binding of tRNA to the ribosomes. The polypeptide is Small ribosomal subunit protein uS10 (Geobacter metallireducens (strain ATCC 53774 / DSM 7210 / GS-15)).